The following is a 92-amino-acid chain: MPRSLKKSPFVAYHLLKKINQMNKAGKKDTITTWSRSSTILPSMIGFTIAVYNGKQHVPIFISDQLVGHKLGEFVSTRNFRTHIKADRKTKR.

This sequence belongs to the universal ribosomal protein uS19 family.

It localises to the plastid. Its subcellular location is the chloroplast. Protein S19 forms a complex with S13 that binds strongly to the 16S ribosomal RNA. This is Small ribosomal subunit protein uS19c from Phaeodactylum tricornutum (strain CCAP 1055/1).